The chain runs to 360 residues: Phospho-N-acetylmuramoyl-pentapeptide-transferase (360 aa).

Transmembrane regions (helical) follow at residues 26 to 46 (AILG…KLIE), 74 to 94 (MGGL…GDLG), 97 to 117 (YVWV…IDDY), 134 to 154 (YILQ…TAAN), 168 to 188 (VMPQ…VGAS), 199 to 219 (GLAI…AYLS), 236 to 256 (SGEL…FLWF), 263 to 283 (VFMG…IAVL), 288 to 308 (ILLV…ILQV), and 338 to 358 (VIVR…ATLK).

The protein belongs to the glycosyltransferase 4 family. MraY subfamily. Mg(2+) is required as a cofactor.

Its subcellular location is the cell inner membrane. It carries out the reaction UDP-N-acetyl-alpha-D-muramoyl-L-alanyl-gamma-D-glutamyl-meso-2,6-diaminopimeloyl-D-alanyl-D-alanine + di-trans,octa-cis-undecaprenyl phosphate = di-trans,octa-cis-undecaprenyl diphospho-N-acetyl-alpha-D-muramoyl-L-alanyl-D-glutamyl-meso-2,6-diaminopimeloyl-D-alanyl-D-alanine + UMP. It functions in the pathway cell wall biogenesis; peptidoglycan biosynthesis. Catalyzes the initial step of the lipid cycle reactions in the biosynthesis of the cell wall peptidoglycan: transfers peptidoglycan precursor phospho-MurNAc-pentapeptide from UDP-MurNAc-pentapeptide onto the lipid carrier undecaprenyl phosphate, yielding undecaprenyl-pyrophosphoryl-MurNAc-pentapeptide, known as lipid I. This chain is Phospho-N-acetylmuramoyl-pentapeptide-transferase, found in Shewanella baltica (strain OS185).